The following is a 121-amino-acid chain: uncharacterized protein (121 aa).

The interval 101-121 (TVVKKEDVRESPVDTFMENAT) is disordered. Over residues 102–112 (VVKKEDVRESP) the composition is skewed to basic and acidic residues.

This is an uncharacterized protein from Schizosaccharomyces pombe (strain 972 / ATCC 24843) (Fission yeast).